Consider the following 166-residue polypeptide: Regulatory protein RecX (166 aa).

It belongs to the RecX family.

It is found in the cytoplasm. In terms of biological role, modulates RecA activity. This Klebsiella pneumoniae (strain 342) protein is Regulatory protein RecX.